The following is a 183-amino-acid chain: Large ribosomal subunit protein uL5 (183 aa).

This sequence belongs to the universal ribosomal protein uL5 family. In terms of assembly, part of the 50S ribosomal subunit; part of the 5S rRNA/L5/L18/L25 subcomplex. Contacts the 5S rRNA and the P site tRNA. Forms a bridge to the 30S subunit in the 70S ribosome.

Functionally, this is one of the proteins that bind and probably mediate the attachment of the 5S RNA into the large ribosomal subunit, where it forms part of the central protuberance. In the 70S ribosome it contacts protein S13 of the 30S subunit (bridge B1b), connecting the 2 subunits; this bridge is implicated in subunit movement. Contacts the P site tRNA; the 5S rRNA and some of its associated proteins might help stabilize positioning of ribosome-bound tRNAs. The chain is Large ribosomal subunit protein uL5 from Fusobacterium nucleatum subsp. nucleatum (strain ATCC 25586 / DSM 15643 / BCRC 10681 / CIP 101130 / JCM 8532 / KCTC 2640 / LMG 13131 / VPI 4355).